The sequence spans 294 residues: N-acetylmuramic acid 6-phosphate etherase (294 aa).

The region spanning 54–217 (VIKSFEEEGR…STASMIGVGK (164 aa)) is the SIS domain. Glutamate 82 serves as the catalytic Proton donor. Glutamate 113 is a catalytic residue.

This sequence belongs to the GCKR-like family. MurNAc-6-P etherase subfamily. As to quaternary structure, homodimer.

It catalyses the reaction N-acetyl-D-muramate 6-phosphate + H2O = N-acetyl-D-glucosamine 6-phosphate + (R)-lactate. It participates in amino-sugar metabolism; N-acetylmuramate degradation. Specifically catalyzes the cleavage of the D-lactyl ether substituent of MurNAc 6-phosphate, producing GlcNAc 6-phosphate and D-lactate. In Bacillus cereus (strain B4264), this protein is N-acetylmuramic acid 6-phosphate etherase.